Consider the following 398-residue polypeptide: Putative transposase y4qJ (398 aa).

This sequence belongs to the transposase 32 family.

This Sinorhizobium fredii (strain NBRC 101917 / NGR234) protein is Putative transposase y4qJ.